Consider the following 401-residue polypeptide: Beta-ketoadipyl-CoA thiolase (401 aa).

Cys-91 serves as the catalytic Acyl-thioester intermediate. Catalysis depends on proton acceptor residues His-357 and Cys-387.

It belongs to the thiolase-like superfamily. Thiolase family.

The catalysed reaction is succinyl-CoA + acetyl-CoA = 3-oxoadipyl-CoA + CoA. Its pathway is aromatic compound metabolism; beta-ketoadipate pathway; acetyl-CoA and succinyl-CoA from 3-oxoadipate: step 2/2. Functionally, catalyzes thiolytic cleavage of beta-ketoadipyl-CoA to succinyl-CoA and acetyl-CoA. This Pseudomonas aeruginosa (strain ATCC 15692 / DSM 22644 / CIP 104116 / JCM 14847 / LMG 12228 / 1C / PRS 101 / PAO1) protein is Beta-ketoadipyl-CoA thiolase (pcaF).